A 384-amino-acid polypeptide reads, in one-letter code: S-adenosylmethionine synthase (384 aa).

An ATP-binding site is contributed by His15. Position 17 (Asp17) interacts with Mg(2+). K(+) is bound at residue Glu43. 2 residues coordinate L-methionine: Glu56 and Gln99. Positions 99–109 are flexible loop; sequence QSADINQGVDR. ATP is bound by residues 164–166, 230–231, Asp239, 245–246, Ala262, and Lys266; these read DAK, RF, and RK. L-methionine is bound at residue Asp239. Lys270 serves as a coordination point for L-methionine.

This sequence belongs to the AdoMet synthase family. As to quaternary structure, homotetramer; dimer of dimers. It depends on Mg(2+) as a cofactor. The cofactor is K(+).

The protein localises to the cytoplasm. The catalysed reaction is L-methionine + ATP + H2O = S-adenosyl-L-methionine + phosphate + diphosphate. It functions in the pathway amino-acid biosynthesis; S-adenosyl-L-methionine biosynthesis; S-adenosyl-L-methionine from L-methionine: step 1/1. Its function is as follows. Catalyzes the formation of S-adenosylmethionine (AdoMet) from methionine and ATP. The overall synthetic reaction is composed of two sequential steps, AdoMet formation and the subsequent tripolyphosphate hydrolysis which occurs prior to release of AdoMet from the enzyme. The polypeptide is S-adenosylmethionine synthase (Haemophilus influenzae (strain PittGG)).